A 563-amino-acid chain; its full sequence is Rab escort protein 1 (563 aa).

Residues 538–563 form a disordered region; the sequence is ELFKEETSPAENTTEEENDGGVEIED. Positions 550-563 are enriched in acidic residues; it reads TTEEENDGGVEIED.

Belongs to the Rab GDI family. Heterotrimer composed of the alpha subunit RGTA, the beta subunit RGTB and REP; within this trimer, RGTA and RGTB form the catalytic component, while REP mediates peptide substrate binding. In terms of tissue distribution, expressed in roots, leaves and flowers.

Its subcellular location is the cytoplasm. Its function is as follows. Substrate-binding subunit of the Rab geranylgeranyltransferase (GGTase) complex. Binds unprenylated Rab proteins and presents the substrate peptide to the catalytic component composed of the alpha subunit RGTA and the beta subunit RGTB. Preferentially binds the GDP-bound form of Rab and stimulates geranylgeranylation of various Rab GTPases in vitro. This Arabidopsis thaliana (Mouse-ear cress) protein is Rab escort protein 1.